The sequence spans 373 residues: Phosphoserine aminotransferase (373 aa).

An L-glutamate-binding site is contributed by arginine 41. Pyridoxal 5'-phosphate-binding positions include 75-76 (GT), tryptophan 101, threonine 152, aspartate 172, and glutamine 195. Lysine 196 is modified (N6-(pyridoxal phosphate)lysine). Position 236-237 (236-237 (NT)) interacts with pyridoxal 5'-phosphate.

It belongs to the class-V pyridoxal-phosphate-dependent aminotransferase family. SerC subfamily. As to quaternary structure, homodimer. It depends on pyridoxal 5'-phosphate as a cofactor.

The protein localises to the cytoplasm. The enzyme catalyses O-phospho-L-serine + 2-oxoglutarate = 3-phosphooxypyruvate + L-glutamate. It carries out the reaction 4-(phosphooxy)-L-threonine + 2-oxoglutarate = (R)-3-hydroxy-2-oxo-4-phosphooxybutanoate + L-glutamate. Its pathway is amino-acid biosynthesis; L-serine biosynthesis; L-serine from 3-phospho-D-glycerate: step 2/3. Catalyzes the reversible conversion of 3-phosphohydroxypyruvate to phosphoserine and of 3-hydroxy-2-oxo-4-phosphonooxybutanoate to phosphohydroxythreonine. The polypeptide is Phosphoserine aminotransferase (Lactobacillus helveticus (strain DPC 4571)).